The sequence spans 454 residues: UPF0210 protein EUBELI_01067 (454 aa).

Belongs to the UPF0210 family. Homodimer.

This Lachnospira eligens (strain ATCC 27750 / DSM 3376 / VPI C15-48 / C15-B4) (Eubacterium eligens) protein is UPF0210 protein EUBELI_01067.